The following is a 636-amino-acid chain: MGSLLSIVLRSATRIIRPIIPSSVLSLLSGPKPVHPLQTLQFDKEAILEKYQAERAKRLRQDGVSQFKSARSGAYDRFRQDVARPQSREPIEAETKVLIVGAGFAGLVAAVKLDQQGVQDFRIVDKAAGFGGTWYWNQYPGAACDVESLIYLPFLEETGYIPSRRFCYGPEIREQVNRVVAKWDLARRSHLSTEITSMTWDESILRWHVKTNHGDHFITQFVVMATGTFHEPKLPGIPGIENFKGDHFHSGRWDYRITGGDETGNMSQLANKTVGIIGTGASAVQLVPKLARDAKKLYVFQRTPSSIRFRDNSLYDTPSLKKSLPPGWQRQRMTDFANILTGQVVDQDCDALEGLQELTMRAILKEASDAGVTVQPEQIPELMQLADFRLMQQIRGQVDEIVKDQETAAKLKPWYSFMCKRPTFHNDYLAAFNNPNVELVDTDGQGVSYLTETAVVANGREYEVDLLVYSTGFDFDVEANFYRRTGIQLVGSRGRTFDEKWDEKGPSTLFGVHIREFPNLLYVGPAQTGVTANWTHTTYAVGDHIAEFVAKSLRDGQYQAFEPTEEAEEEWGRRNEEGSEMRLLFAQSCPPGYYNREGKPEEIPARWAYFPKGIIEWTRITQEWREKGDYQGMDKR.

Residues Asp125, 133–136 (TWYW), Asp145, Tyr151, and Ile195 each bind FAD. Position 143–145 (143–145 (ACD)) interacts with NADP(+). Residues 279–285 (TGASAVQ), 302–303 (RT), and 420–421 (KR) contribute to the NADP(+) site. Position 534 (Trp534) interacts with FAD.

Belongs to the FAD-binding monooxygenase family. Requires FAD as cofactor.

The enzyme catalyses ketocytochalasin + NADPH + O2 + H(+) = iso-precytochalasin + NADP(+) + H2O. It catalyses the reaction iso-precytochalasin + NADPH + O2 + H(+) = cytochalasin Z16 + NADP(+) + H2O. Its pathway is mycotoxin biosynthesis. Functionally, ketocytochalasin monooxygenase; part of the gene cluster that mediates the biosynthesis of a family of the mycotoxins cytochalasins E and K. The hybrid PKS-NRPS synthetase ccsA and the enoyl reductase ccsC are responsible for fusion of phenylalanine with an octaketide backbone and subsequent release of the stable tetramic acid precursor. The polyketide synthase module (PKS) of the PKS-NRPS ccsA is responsible for the synthesis of the octaketide backbone. The downstream nonribosomal peptide synthetase (NRPS) amidates the carboxyl end of the octaketide with a phenylalanine. A reductase-like domain (R) at the C-terminus catalyzes the reductive release of the polyketide-amino acid intermediate. Because ccsA lacks a designated enoylreductase (ER) domain, the required activity is provided the enoyl reductase ccsC. Upon formation of the 11-membered carbocycle-fused perhydroisoindolone intermediate, a number of oxidative steps are required to afford the final cytochalasin E and K, including two hydroxylations at C17 and C18, one alcohol oxidation at C17, one epoxidation at C6 and C7 and two Baeyer-Villiger oxidations. The oxidative modification at C17, C18 and the C6-C7 epoxidation are likely to be catalyzed by the two cytochrome P450 oxygenases ccsD and ccsG. CcsD may be responsible for the epoxidation of the C6-C7 double bond. CcsG may be responsible for the successive oxidative modifications at C17 and C18. The double Baeyer-Villiger oxidations of ketocytochalasin to precytochalasin and cytochalasin Z(16) are among the final steps leading to cytochalasin E and K and are catalyzed by ccsB. The first oxygen insertion step follows that of the classic BVMO mechanism, generating the ester precytochalasin. Release of precytochalasin into an aqueous environment can generate the shunt product iso-precytochalasin through spontaneous isomerization. Alternatively, precytochalasin can undergo further oxidation by ccsB to yield the in-line carbonate-containing cytochalasin Z(16). Cytochalasin Z(16) is a precursor to cytochalasin E and cytochalasin K, whereas iso-precytochalasin is a precursor to cytochalasin Z(17) and rosellichalasin. The hydrolyase ccsE may catalyze hydrolysis of epoxide bond in cytochalasin E to afford cytochalasin K. The function of ccsF has not been assigned but it may play a role in post-PKS-NRPS biosynthetic step, resistance or transport of cytochalasins and related PKS-NRPS products. This is Ketocytochalasin monooxygenase from Aspergillus clavatus (strain ATCC 1007 / CBS 513.65 / DSM 816 / NCTC 3887 / NRRL 1 / QM 1276 / 107).